Consider the following 303-residue polypeptide: CDAN1-interacting nuclease 1 (303 aa).

It is found in the nucleus. Its subcellular location is the cytoplasm. May play a role in erythroid cell differentiation. The sequence is that of CDAN1-interacting nuclease 1 (cdin1) from Xenopus tropicalis (Western clawed frog).